The sequence spans 136 residues: MSQLVYFSSSSENTQRFIERLGLPAVRIPLNERERIQVDEPYILIVPSYGGGGTAGAVPRQVIRFLNDEHNRALLRGVIASGNRNFGEAYGRAGDVIARKCSVPWLYRFELMGTQSDIENVRKGVTEFWQRQPQNA.

This sequence belongs to the NrdI family.

Probably involved in ribonucleotide reductase function. In Escherichia coli O1:K1 / APEC, this protein is Protein NrdI.